The sequence spans 657 residues: 1-deoxy-D-xylulose-5-phosphate synthase (657 aa).

Thiamine diphosphate contacts are provided by residues His73 and 113–115 (SHA). Asp145 is a binding site for Mg(2+). Residues 146–147 (GA), Asn175, Tyr293, and Glu375 each bind thiamine diphosphate. Mg(2+) is bound at residue Asn175.

Belongs to the transketolase family. DXPS subfamily. As to quaternary structure, homodimer. It depends on Mg(2+) as a cofactor. Thiamine diphosphate is required as a cofactor.

The catalysed reaction is D-glyceraldehyde 3-phosphate + pyruvate + H(+) = 1-deoxy-D-xylulose 5-phosphate + CO2. Its pathway is metabolic intermediate biosynthesis; 1-deoxy-D-xylulose 5-phosphate biosynthesis; 1-deoxy-D-xylulose 5-phosphate from D-glyceraldehyde 3-phosphate and pyruvate: step 1/1. In terms of biological role, catalyzes the acyloin condensation reaction between C atoms 2 and 3 of pyruvate and glyceraldehyde 3-phosphate to yield 1-deoxy-D-xylulose-5-phosphate (DXP). This is 1-deoxy-D-xylulose-5-phosphate synthase from Pseudarthrobacter chlorophenolicus (strain ATCC 700700 / DSM 12829 / CIP 107037 / JCM 12360 / KCTC 9906 / NCIMB 13794 / A6) (Arthrobacter chlorophenolicus).